The primary structure comprises 170 residues: Urease accessory protein UreE (170 aa).

The segment at 144-170 is disordered; that stretch reads GGHSHDDHDHHHGHHEHDHEHHHHHHD. A compositionally biased stretch (basic and acidic residues) spans 146–162; sequence HSHDDHDHHHGHHEHDH.

Belongs to the UreE family.

The protein localises to the cytoplasm. Functionally, involved in urease metallocenter assembly. Binds nickel. Probably functions as a nickel donor during metallocenter assembly. This chain is Urease accessory protein UreE, found in Brucella anthropi (strain ATCC 49188 / DSM 6882 / CCUG 24695 / JCM 21032 / LMG 3331 / NBRC 15819 / NCTC 12168 / Alc 37) (Ochrobactrum anthropi).